The primary structure comprises 637 residues: Chaperone protein DnaK (637 aa).

Residue threonine 198 is modified to Phosphothreonine; by autocatalysis. The interval 597–637 (MYQQAAQESGQTEGAAQDPKGAAQDDDVVDADFEEVKDHKK) is disordered. Over residues 600 to 610 (QAAQESGQTEG) the composition is skewed to polar residues. Over residues 620-629 (QDDDVVDADF) the composition is skewed to acidic residues.

This sequence belongs to the heat shock protein 70 family.

Acts as a chaperone. The protein is Chaperone protein DnaK of Desulforapulum autotrophicum (strain ATCC 43914 / DSM 3382 / VKM B-1955 / HRM2) (Desulfobacterium autotrophicum).